The primary structure comprises 60 residues: Large ribosomal subunit protein bL32 (60 aa).

It belongs to the bacterial ribosomal protein bL32 family.

The chain is Large ribosomal subunit protein bL32 from Clostridium novyi (strain NT).